A 572-amino-acid chain; its full sequence is MRTSQYLLSTLKETPADAEVISHQLMLRAGMIRKLASGLYTWLPTGLRVLNKVENIVREEMNYAGAIEVSMPVVQPADLWQESGRWEQYGPELLRFVDRGDRPFVLGPTHEEVITDLVRNEISSYKQLPLNFYQIQTKFRDEVRPRFGVMRSREFLMKDAYSFHTTQESLQETYEAMYAAYSRIFSRMGLDFRAVQADTGSIGGNASHEFQVLAQSGEDDIVFSTASDYAANIELAEALAPATGRAAANQPMQLVNTPDARTIAELVEQHGLPIEKTVKTLLVHASEESGHALVALLVRGDHELNEVKAEKLALVASPLTFANEAEIRALVNAGPGSLGPVNLPLPIVADRAVAAMSDFGAGANIDGKHYFGINWERDAALPQIADIRNVIEGDPSPDGKGTLLIKRGIEVGHIFQLGTKYTEALNATVQGEDGRNQLMTMGCYGIGVTRVVAAAIEQNHDERGIIWPDAIAPFQVAILPMNMHKSFRVKEVAERLYDGLRAKGIEVLLDDRKERPGVMFADMELIGIPHTIVIGDRNLDNNEIEYKYRRSGDKLMISVDEIEAFLQAQIAR.

The protein belongs to the class-II aminoacyl-tRNA synthetase family. ProS type 1 subfamily. Homodimer.

The protein localises to the cytoplasm. The catalysed reaction is tRNA(Pro) + L-proline + ATP = L-prolyl-tRNA(Pro) + AMP + diphosphate. Functionally, catalyzes the attachment of proline to tRNA(Pro) in a two-step reaction: proline is first activated by ATP to form Pro-AMP and then transferred to the acceptor end of tRNA(Pro). As ProRS can inadvertently accommodate and process non-cognate amino acids such as alanine and cysteine, to avoid such errors it has two additional distinct editing activities against alanine. One activity is designated as 'pretransfer' editing and involves the tRNA(Pro)-independent hydrolysis of activated Ala-AMP. The other activity is designated 'posttransfer' editing and involves deacylation of mischarged Ala-tRNA(Pro). The misacylated Cys-tRNA(Pro) is not edited by ProRS. The polypeptide is Proline--tRNA ligase (Edwardsiella ictaluri (strain 93-146)).